The following is a 496-amino-acid chain: Glutamate--tRNA ligase (496 aa).

Residues 12-22 (PSPTGHLHIGN) carry the 'HIGH' region motif. Residues 259–263 (KLSKR) carry the 'KMSKS' region motif. Lys-262 provides a ligand contact to ATP.

Belongs to the class-I aminoacyl-tRNA synthetase family. Glutamate--tRNA ligase type 1 subfamily. In terms of assembly, monomer.

The protein localises to the cytoplasm. It catalyses the reaction tRNA(Glu) + L-glutamate + ATP = L-glutamyl-tRNA(Glu) + AMP + diphosphate. Its function is as follows. Catalyzes the attachment of glutamate to tRNA(Glu) in a two-step reaction: glutamate is first activated by ATP to form Glu-AMP and then transferred to the acceptor end of tRNA(Glu). In Lactiplantibacillus plantarum (strain ATCC BAA-793 / NCIMB 8826 / WCFS1) (Lactobacillus plantarum), this protein is Glutamate--tRNA ligase.